Reading from the N-terminus, the 1022-residue chain is Probable E3 ubiquitin-protein ligase HERC6 (1022 aa).

RCC1 repeat units follow at residues 41–92 (NHRV…AVCH), 93–145 (KGRV…ALSK), 147–198 (SQVF…ALSL), 200–253 (GTSF…VLTQ), and 254–304 (DGKV…AYVH). An HECT domain is found at 693 to 1017 (EATDFCKVLV…INNNRGFVSP (325 aa)). Cys985 serves as the catalytic Glycyl thioester intermediate.

In terms of tissue distribution, detected in brain, heart, placenta and testis.

It is found in the cytoplasm. It localises to the cytosol. It carries out the reaction S-ubiquitinyl-[E2 ubiquitin-conjugating enzyme]-L-cysteine + [acceptor protein]-L-lysine = [E2 ubiquitin-conjugating enzyme]-L-cysteine + N(6)-ubiquitinyl-[acceptor protein]-L-lysine.. Its pathway is protein modification; protein ubiquitination. Its function is as follows. E3 ubiquitin-protein ligase which accepts ubiquitin from an E2 ubiquitin-conjugating enzyme in the form of a thioester and then directly transfers the ubiquitin to targeted substrates. This chain is Probable E3 ubiquitin-protein ligase HERC6 (HERC6), found in Homo sapiens (Human).